A 505-amino-acid chain; its full sequence is tRNA (guanine(6)-N(2))-methyltransferase THUMP3 (505 aa).

Residues 145–182 (KAKRRKANQSAGKEKADCGQGDKADEKDGKKKHASSTS) are disordered. The span at 156–173 (GKEKADCGQGDKADEKDG) shows a compositional bias: basic and acidic residues. Positions 171-287 (KDGKKKHASS…DNEVIVAIAL (117 aa)) constitute a THUMP domain.

It belongs to the methyltransferase superfamily. In terms of assembly, part of the heterodimeric THUMPD3-TRM112 methyltransferase complex; this complex forms an active tRNA methyltransferase, where TRMT112 acts as an activator of the catalytic subunit THUMPD3. As to expression, ubiquitously expressed. Abundantly expressed in the testis, also expressed in the brain, heart, kidney, liver, lung, muscle and spleen.

It is found in the cytoplasm. It catalyses the reaction guanosine(6) in tRNA + S-adenosyl-L-methionine = N(2)-methylguanosine(6) in tRNA + S-adenosyl-L-homocysteine + H(+). The catalysed reaction is guanosine(7) in tRNA + S-adenosyl-L-methionine = N(2)-methylguanosine(7) in tRNA + S-adenosyl-L-homocysteine + H(+). In terms of biological role, catalytic subunit of the THUMPD3-TRM112 methyltransferase complex, that specifically mediates the S-adenosyl-L-methionine-dependent N(2)-methylation of guanosine nucleotide at position 6 (m2G6) in tRNAs. This is one of the major tRNA (guanine-N(2))-methyltransferases. Also catalyzes the S-adenosyl-L-methionine-dependent N(2)-methylation of guanosine nucleotide at position 7 of tRNA(Trp). This Mus musculus (Mouse) protein is tRNA (guanine(6)-N(2))-methyltransferase THUMP3.